The following is a 63-amino-acid chain: Large ribosomal subunit protein uL30 (63 aa).

It belongs to the universal ribosomal protein uL30 family. In terms of assembly, part of the 50S ribosomal subunit.

The sequence is that of Large ribosomal subunit protein uL30 from Rickettsia peacockii (strain Rustic).